The primary structure comprises 356 residues: RuBisCO accumulation factor 1 (356 aa).

Positions 9-192 are N-terminal alpha-helix; the sequence is LSEEERQELL…RALIEALLLD (184 aa). Positions 216 to 342 are C-terminal beta-sheet; it reads PRLLPFAGTL…LVLILRPKRV (127 aa).

The protein belongs to the RAF family. As to quaternary structure, homodimer. Forms an RbcL(8)-Raf1(8) complex. Forms complexes of many stoichiometries with RbcL with and without RbcS. RbcX and Raf1 can bind simultaneously to RbcL.

The protein resides in the cytoplasm. Its function is as follows. A major RuBisCO chaperone. Acts after GroEL-GroES chaperonin to fold and/or assemble the large subunit of RuBisCO (ccbL, rbcL). Cooperates with RbcX in RbcL folding, plays the major role in assembly of dimers into RbcL(8)-Raf1(8) intermediate complexes. RbcS replaces Raf1, leading to holoenzyme formation. In terms of biological role, the Raf1 dimer brackets an RbcL dimer, leading to RbcL(8)-Raf1(8) complex formation. RbcS displaces Raf1, resulting in holoenzyme formation. Probably plays a role in early carboxysome assembly; in its absence CcaA, CcmM, CcmN, RbcL and RbcS colocalize in small patches while the shell proteins CcmK2, CcmK3 and CcmK4 are found diffused in the cytoplasm. It has been suggested that Raf1 and RbcX are partially functionally redundant. Other evidence suggests they are antagonistic in mediating RuBisCO assembly. The polypeptide is RuBisCO accumulation factor 1 (Synechococcus elongatus (strain ATCC 33912 / PCC 7942 / FACHB-805) (Anacystis nidulans R2)).